Reading from the N-terminus, the 203-residue chain is MNIGVLGFQGDVQEHMDMLKKLSRKNRDLTLTHVKRVIDLEHVDALIIPGGESTTIYKLTLEYGLYDAIVKRSAEGMPIMATCAGLILVSKNTNDERVRGMGLLDVTIRRNAYGRQVMSFETDIEINGIGMFPAVFIRAPVIEDSGKTEVLGTLDGKPVIVKQGNVIGMTFHPELTGDTRLHEYFINMVRGRGGYISTADVKR.

51–53 lines the L-glutamine pocket; it reads GES. Cys83 functions as the Nucleophile in the catalytic mechanism. Residues Arg110 and 137–138 contribute to the L-glutamine site; that span reads IR. Active-site charge relay system residues include His172 and Glu174.

It belongs to the glutaminase PdxT/SNO family. In terms of assembly, in the presence of PdxS, forms a dodecamer of heterodimers. Only shows activity in the heterodimer.

The enzyme catalyses aldehydo-D-ribose 5-phosphate + D-glyceraldehyde 3-phosphate + L-glutamine = pyridoxal 5'-phosphate + L-glutamate + phosphate + 3 H2O + H(+). It carries out the reaction L-glutamine + H2O = L-glutamate + NH4(+). It functions in the pathway cofactor biosynthesis; pyridoxal 5'-phosphate biosynthesis. Its function is as follows. Catalyzes the hydrolysis of glutamine to glutamate and ammonia as part of the biosynthesis of pyridoxal 5'-phosphate. The resulting ammonia molecule is channeled to the active site of PdxS. The sequence is that of Pyridoxal 5'-phosphate synthase subunit PdxT from Thermoplasma acidophilum (strain ATCC 25905 / DSM 1728 / JCM 9062 / NBRC 15155 / AMRC-C165).